Reading from the N-terminus, the 963-residue chain is Spliceosome associated factor 3, U4/U6 recycling protein (963 aa).

Residues 1–11 (MATAAATSASE) are compositionally biased toward low complexity. Disordered stretches follow at residues 1–36 (MATA…RTRR) and 49–86 (KTMG…YEWE). Alanine 2 carries the N-acetylalanine modification. A mediates interaction with PRPF3 region spans residues 2 to 351 (ATAAATSASE…LVPDLWIRYS (350 aa)). A phosphoserine mark is found at serine 10 and serine 16. A compositionally biased stretch (basic and acidic residues) spans 14–23 (AESKAGPKAD). A coiled-coil region spans residues 21–46 (KADGEEDEVKAARTRRKVLSRAVAAA). The span at 57–69 (QQEEGVSESDGDE) shows a compositional bias: acidic residues. Residues 82–110 (EYEWEYDEEEEKNQLEIERLEEQLSINVY) are a coiled coil. HAT repeat units lie at residues 126 to 158 (GELT…DEIS), 164 to 195 (LDRE…YSVG), 201 to 237 (GGLE…FESA), 242 to 275 (ARLE…WSED), 324 to 356 (GDPA…YLDR), 359 to 391 (KVKD…AMER), 394 to 430 (VDHQ…YLRR), and 487 to 520 (NNMQ…LERA). Serine 215 is subject to Phosphoserine. Residues 487-520 (NNMQKARELWDSIMTRGNAKYANMWLEYYNLERA) form a required for interaction with USP4 region. A necessary and sufficient for U6 snRNA binding region spans residues 537 to 953 (CTSDYPEHVC…AATEAPKMSN (417 aa)). The stretch at 559-619 (LEDWDIAVQK…ALKKKKKIRG (61 aa)) forms a coiled coil. Positions 600–670 (QRKRARAEKK…EVAPGPAGKC (71 aa)) are required for nuclear localization. A Nuclear localization signal motif is present at residues 601-608 (RKRARAEK). Positions 608–619 (KKALKKKKKIRG) are enriched in basic and acidic residues. The tract at residues 608-712 (KKALKKKKKI…SITVFVSNLP (105 aa)) is disordered. Residues 620–635 (PEKRGADEDDEKEWGD) show a composition bias toward basic residues. Positions 644–657 (RRRVENSIPAAGET) are enriched in acidic residues. Serine 650 carries the phosphoserine modification. Threonine 657 carries the phosphothreonine modification. Basic and acidic residues predominate over residues 695 to 712 (VLHDSSKDSITVFVSNLP). The region spanning 704-782 (ITVFVSNLPY…RPMFVSPCVD (79 aa)) is the RRM 1 domain. A phosphoserine mark is found at serine 769, serine 795, and serine 852. The RRM 2 domain maps to 801–878 (HKLFISGLPF…NVIKVAISNP (78 aa)). Residues 900-909 (PQTYGARGKG) are compositionally biased toward basic and acidic residues. The residue at position 906 (arginine 906) is an Omega-N-methylarginine.

Component of the 7SK snRNP complex at least composed of P-TEFb (composed of CDK9 and CCNT1/cyclin-T1), HEXIM1, HEXIM2, BCDIN3, SART3 proteins and 7SK and U6 snRNAs. Interacts with AGO1 and AGO2. Interacts with PRPF3 and USP4; the interaction with PRPF3 is direct and recruits USP4 to its substrate PRPF3. Interacts with USP15; the interaction is direct.

The protein localises to the nucleus. It localises to the nucleoplasm. Its subcellular location is the cajal body. It is found in the nucleus speckle. The protein resides in the cytoplasm. U6 snRNP-binding protein that functions as a recycling factor of the splicing machinery. Promotes the initial reassembly of U4 and U6 snRNPs following their ejection from the spliceosome during its maturation. Also binds U6atac snRNPs and may function as a recycling factor for U4atac/U6atac spliceosomal snRNP, an initial step in the assembly of U12-type spliceosomal complex. The U12-type spliceosomal complex plays a role in the splicing of introns with non-canonical splice sites. May also function as a substrate-targeting factor for deubiquitinases like USP4 and USP15. Recruits USP4 to ubiquitinated PRPF3 within the U4/U5/U6 tri-snRNP complex, promoting PRPF3 deubiquitination and thereby regulating the spliceosome U4/U5/U6 tri-snRNP spliceosomal complex disassembly. May also recruit the deubiquitinase USP15 to histone H2B and mediate histone deubiquitination, thereby regulating gene expression and/or DNA repair. May play a role in hematopoiesis probably through transcription regulation of specific genes including MYC. This Pongo abelii (Sumatran orangutan) protein is Spliceosome associated factor 3, U4/U6 recycling protein.